The chain runs to 112 residues: Frizzy aggregation protein FrzB (112 aa).

Necessary for proper aggregation of cells to form fruiting bodies. FRZ genes define a system of signal transduction analogous to the enterobacterial chemotaxis systems. The chain is Frizzy aggregation protein FrzB (frzB) from Myxococcus xanthus.